The sequence spans 111 residues: UPF0060 membrane protein NFA_36830 (111 aa).

Helical transmembrane passes span 7 to 27 (LVLF…VWQG), 33 to 53 (GLWW…VATF), 62 to 82 (VLAA…VLVD), and 91 to 111 (LLGA…PRGG).

This sequence belongs to the UPF0060 family.

It is found in the cell membrane. In Nocardia farcinica (strain IFM 10152), this protein is UPF0060 membrane protein NFA_36830.